The following is a 430-amino-acid chain: Nitroalkane oxidase (430 aa).

FAD-binding positions include 132-135 (LVFS), 140-142 (VAN), 170-172 (WAT), arginine 301, glutamine 311, 372-376 (NAVGI), and 397-401 (IFDGG). The active-site Proton acceptor is aspartate 399.

Belongs to the acyl-CoA dehydrogenase family. Homotetramer. Requires FAD as cofactor.

It carries out the reaction a primary nitroalkane + O2 + H2O = an aldehyde + nitrite + H2O2 + H(+). The catalysed reaction is a secondary nitroalkane + O2 + H2O = a ketone + nitrite + H2O2 + H(+). Its function is as follows. Nitroalkane oxidase (NAO) catalyzes the oxidation of nitroalkanes to the corresponding aldehydes or ketones with the release of nitrite and the consumption of molecular oxygen to yield hydrogen peroxide. NAO is unusual, since it catalyzes substrate oxidation by removing a substrate proton to form a carbanion intermediate. Prefers longer nitroalkanes, with 1-nitrohexane having the highest activity. This is Nitroalkane oxidase from Podospora anserina (strain S / ATCC MYA-4624 / DSM 980 / FGSC 10383) (Pleurage anserina).